Consider the following 415-residue polypeptide: Lipid II:glycine glycyltransferase (415 aa).

The protein belongs to the FemABX family.

It is found in the cytoplasm. The enzyme catalyses beta-D-GlcNAc-(1-&gt;4)-Mur2Ac(oyl-L-Ala-D-isoglutaminyl-L-Lys-D-Ala-D-Ala)-di-trans,octa-cis-undecaprenyl diphosphate + glycyl-tRNA(Gly) = beta-D-GlcNAc-(1-&gt;4)-Mur2Ac(oyl-L-Ala-D-isoglutaminyl-L-Lys-(N(6)-Gly)-D-Ala-D-Ala)-di-trans,octa-cis-undecaprenyl diphosphate + tRNA(Gly) + H(+). In terms of biological role, catalyzes the incorporation of amino acid(s) into the interchain peptide bridge of peptidoglycan, using aminoacyl-tRNA as amino acid donor. The polypeptide is Lipid II:glycine glycyltransferase (femX) (Staphylococcus saprophyticus subsp. saprophyticus (strain ATCC 15305 / DSM 20229 / NCIMB 8711 / NCTC 7292 / S-41)).